The following is a 163-amino-acid chain: uncharacterized protein (163 aa).

This is an uncharacterized protein from Homo sapiens (Human).